The primary structure comprises 750 residues: EF-hand domain-containing family member C2 (750 aa).

DM10 domains follow at residues D75–G182, D226–Y368, and I430–T537. One can recognise an EF-hand domain in the interval S557 to G592.

In terms of assembly, microtubule inner protein component of sperm flagellar doublet microtubules.

The protein resides in the cytoplasm. The protein localises to the cytoskeleton. It is found in the cilium axoneme. It localises to the flagellum axoneme. Functionally, microtubule inner protein (MIP) part of the dynein-decorated doublet microtubules (DMTs) in cilia axoneme, which is required for motile cilia beating. This chain is EF-hand domain-containing family member C2 (Efhc2), found in Mus musculus (Mouse).